Reading from the N-terminus, the 850-residue chain is Adenylate cyclase (850 aa).

The tract at residues 1-535 (MYLYIETLKQ…DISHHFPLRL (535 aa)) is catalytic. The tract at residues 541–850 (KALYSPCEIR…SLPTKQCQLH (310 aa)) is regulatory.

Belongs to the adenylyl cyclase class-1 family.

The protein resides in the cytoplasm. The enzyme catalyses ATP = 3',5'-cyclic AMP + diphosphate. Its activity is regulated as follows. The regulatory domain is involved in the regulation of cyclase activity by the carbon source. In Yersinia pestis, this protein is Adenylate cyclase (cya).